The primary structure comprises 427 residues: Dihydroorotase (427 aa).

H58 and H60 together coordinate Zn(2+). Residues 60–62 (HYR) and N92 each bind substrate. Residues D150, H177, and H230 each coordinate Zn(2+). Position 276 (N276) interacts with substrate. D303 is a binding site for Zn(2+). The active site involves D303. Substrate contacts are provided by residues H307 and 321–322 (FG).

This sequence belongs to the metallo-dependent hydrolases superfamily. DHOase family. Class I DHOase subfamily. Zn(2+) serves as cofactor.

The enzyme catalyses (S)-dihydroorotate + H2O = N-carbamoyl-L-aspartate + H(+). It participates in pyrimidine metabolism; UMP biosynthesis via de novo pathway; (S)-dihydroorotate from bicarbonate: step 3/3. Catalyzes the reversible cyclization of carbamoyl aspartate to dihydroorotate. This chain is Dihydroorotase, found in Lactobacillus leichmannii.